Here is a 181-residue protein sequence, read N- to C-terminus: S-fimbrial protein subunit SfaA (181 aa).

The signal sequence occupies residues 1–24 (MKLKFISMAVFSALTLGVATNASA). Residues Cys-44 and Cys-84 are joined by a disulfide bond.

The protein belongs to the fimbrial protein family.

It localises to the fimbrium. Its function is as follows. Fimbriae (also called pili), polar filaments radiating from the surface of the bacterium to a length of 0.5-1.5 micrometers and numbering 100-300 per cell, enable bacteria to colonize the epithelium of specific host organs. In terms of biological role, the major fimbrial subunit. Interacts with alpha-sialic acid-(2-3)-beta-Gal containing receptors. It belongs to the group of Mrh (Mannose-resistant hemagglutination) fimbrial proteins. This is S-fimbrial protein subunit SfaA (sfaA) from Escherichia coli O6:K15:H31 (strain 536 / UPEC).